Reading from the N-terminus, the 213-residue chain is Bcl-2-related ovarian killer protein (213 aa).

Ser-7 is modified (phosphoserine). An interactions with ITPR1 region spans residues 15-45; that stretch reads MDAFDRSPTDKELVAQAKALGREYVHARLLR. Residues Lys-25 and Lys-32 each participate in a glycyl lysine isopeptide (Lys-Gly) (interchain with G-Cter in ubiquitin) cross-link. A BH4 motif is present at residues 32 to 44; the sequence is KALGREYVHARLL. Positions 67-83 match the BH3 motif; it reads VCTVLLRLGDELEQIRP. The segment at 71–79 is nuclear export signal; the sequence is LLRLGDELE. The BH1 signature appears at 113–132; that stretch reads HIFSAGITWGKVVSLYSVAA. Glycyl lysine isopeptide (Lys-Gly) (interchain with G-Cter in ubiquitin) cross-links involve residues Lys-160 and Lys-177. The BH2 motif lies at 165–179; it reads WLRRRGGWTDVLKCV. Residues 190–210 form a helical membrane-spanning segment; sequence WLVATLCSFGRFLKAAFFLLL.

Belongs to the Bcl-2 family. In terms of assembly, monomer; positively regulates apoptotic process. Homodimer. Heterodimer. Oligomer; promoted by apoptotic stimuli and BH3-only proteins; mediates constitutive activation. Interacts (via BH4 domain) with ITPR1; enhances BOK expression and stabilization; limits apoptosis and prevents ubiquitination and then degradation; protects ITPR1 from proteolysis by CASP3 during apoptosis. Interacts with ITPR2 and ITPR3; binds most strongly to ITPR2, and barely to ITPR3; regulates their expression. Interacts with XPO1; translocates to the cytoplasm. Interacts with BNIP3; promotes oligomerization. Ubiquitinated by AMFR/gp78 E3 ubiquitin ligase complex; mediates degradation by ubiquitin-proteasome pathway in a VCP/p97-dependent manner; prevents from proapoptotic activity; promotes degradation of newly synthesized proteins that are not ITPR1 associated. As to expression, widely expressed. Highly expressed in brain, kidney, and spleen.

The protein resides in the mitochondrion membrane. Its subcellular location is the endoplasmic reticulum membrane. It is found in the mitochondrion inner membrane. It localises to the cytoplasm. The protein localises to the nucleus. The protein resides in the mitochondrion. Its subcellular location is the endoplasmic reticulum. It is found in the mitochondrion outer membrane. It localises to the early endosome membrane. The protein localises to the recycling endosome membrane. The protein resides in the nucleus outer membrane. Its subcellular location is the golgi apparatus. It is found in the cis-Golgi network membrane. It localises to the trans-Golgi network membrane. The protein localises to the membrane. Apoptosis regulator that functions through different apoptotic signaling pathways. Plays a roles as pro-apoptotic protein that positively regulates intrinsic apoptotic process in a BAX- and BAK1-dependent manner or in a BAX- and BAK1-independent manner. In response to endoplasmic reticulum stress promotes mitochondrial apoptosis through downstream BAX/BAK1 activation and positive regulation of PERK-mediated unfolded protein response. Activates apoptosis independently of heterodimerization with survival-promoting BCL2 and BCL2L1 through induction of mitochondrial outer membrane permeabilization, in a BAX- and BAK1-independent manner, in response to inhibition of ERAD-proteasome degradation system, resulting in cytochrome c release. In response to DNA damage, mediates intrinsic apoptotic process in a TP53-dependent manner. Plays a role in granulosa cell apoptosis by CASP3 activation. Plays a roles as anti-apoptotic protein during neuronal apoptotic process, by negatively regulating poly ADP-ribose polymerase-dependent cell death through regulation of neuronal calcium homeostasis and mitochondrial bioenergetics in response to NMDA excitation. In addition to its role in apoptosis, may regulate trophoblast cell proliferation during the early stages of placental development, by acting on G1/S transition through regulation of CCNE1 expression. May also play a role as an inducer of autophagy by disrupting interaction between MCL1 and BECN1. The polypeptide is Bcl-2-related ovarian killer protein (Mus musculus (Mouse)).